Consider the following 194-residue polypeptide: Crossover junction endodeoxyribonuclease RuvC (194 aa).

Active-site residues include D8, E72, and D144. Mg(2+) contacts are provided by D8, E72, and D144.

It belongs to the RuvC family. As to quaternary structure, homodimer which binds Holliday junction (HJ) DNA. The HJ becomes 2-fold symmetrical on binding to RuvC with unstacked arms; it has a different conformation from HJ DNA in complex with RuvA. In the full resolvosome a probable DNA-RuvA(4)-RuvB(12)-RuvC(2) complex forms which resolves the HJ. Mg(2+) serves as cofactor.

It localises to the cytoplasm. The enzyme catalyses Endonucleolytic cleavage at a junction such as a reciprocal single-stranded crossover between two homologous DNA duplexes (Holliday junction).. In terms of biological role, the RuvA-RuvB-RuvC complex processes Holliday junction (HJ) DNA during genetic recombination and DNA repair. Endonuclease that resolves HJ intermediates. Cleaves cruciform DNA by making single-stranded nicks across the HJ at symmetrical positions within the homologous arms, yielding a 5'-phosphate and a 3'-hydroxyl group; requires a central core of homology in the junction. The consensus cleavage sequence is 5'-(A/T)TT(C/G)-3'. Cleavage occurs on the 3'-side of the TT dinucleotide at the point of strand exchange. HJ branch migration catalyzed by RuvA-RuvB allows RuvC to scan DNA until it finds its consensus sequence, where it cleaves and resolves the cruciform DNA. The protein is Crossover junction endodeoxyribonuclease RuvC of Psychrobacter arcticus (strain DSM 17307 / VKM B-2377 / 273-4).